Reading from the N-terminus, the 181-residue chain is UPF0228 protein MA_3117 (181 aa).

This sequence belongs to the UPF0228 family.

This Methanosarcina acetivorans (strain ATCC 35395 / DSM 2834 / JCM 12185 / C2A) protein is UPF0228 protein MA_3117.